The chain runs to 808 residues: Phenylalanine--tRNA ligase beta subunit (808 aa).

The tRNA-binding domain maps to 40–157; the sequence is NKGATNVVVG…QSVEPGQDAL (118 aa). Residues 411-486 form the B5 domain; it reads RSERVIALDL…RLYGYDELPS (76 aa). Mg(2+) contacts are provided by Asp464, Asp470, Glu473, and Glu474. Residues 714–807 form the FDX-ACB domain; it reads PRYPAITRDM…VQKQTGAVLR (94 aa).

The protein belongs to the phenylalanyl-tRNA synthetase beta subunit family. Type 1 subfamily. Tetramer of two alpha and two beta subunits. Requires Mg(2+) as cofactor.

The protein resides in the cytoplasm. It catalyses the reaction tRNA(Phe) + L-phenylalanine + ATP = L-phenylalanyl-tRNA(Phe) + AMP + diphosphate + H(+). The sequence is that of Phenylalanine--tRNA ligase beta subunit from Shouchella clausii (strain KSM-K16) (Alkalihalobacillus clausii).